The sequence spans 341 residues: Phosphate acyltransferase (341 aa).

This sequence belongs to the PlsX family. In terms of assembly, homodimer. Probably interacts with PlsY.

It is found in the cytoplasm. The catalysed reaction is a fatty acyl-[ACP] + phosphate = an acyl phosphate + holo-[ACP]. It participates in lipid metabolism; phospholipid metabolism. In terms of biological role, catalyzes the reversible formation of acyl-phosphate (acyl-PO(4)) from acyl-[acyl-carrier-protein] (acyl-ACP). This enzyme utilizes acyl-ACP as fatty acyl donor, but not acyl-CoA. This Pseudoalteromonas atlantica (strain T6c / ATCC BAA-1087) protein is Phosphate acyltransferase.